Reading from the N-terminus, the 260-residue chain is MTETIATIKEKLASLADPHDARLLTWRQDKRCGVQKAIALWEKRLALARKKQADFNQRFNFERDYWLKGVELVAGVDEVGRGPLAGPVVAAAVILPHDFNIVDVIDSKQVAQHKREQLYEIILDQAVSIGIGSVDAKTIDEINIYEAARQAMTEAINNLAPQPQALLIDAMQVYLDITQQSLIKGDARSNSIGAASIVAKVIRDKMMTDYDKVYPGYDFAQNAGYGTKKHLAGIDKLGVTPIHRRSFQPVHDAIVNKKNC.

The 189-residue stretch at 71–259 (ELVAGVDEVG…VHDAIVNKKN (189 aa)) folds into the RNase H type-2 domain. The a divalent metal cation site is built by Asp77, Glu78, and Asp169.

Belongs to the RNase HII family. It depends on Mn(2+) as a cofactor. Mg(2+) is required as a cofactor.

Its subcellular location is the cytoplasm. The enzyme catalyses Endonucleolytic cleavage to 5'-phosphomonoester.. Functionally, endonuclease that specifically degrades the RNA of RNA-DNA hybrids. The chain is Ribonuclease HII from Leuconostoc citreum (strain KM20).